Here is a 284-residue protein sequence, read N- to C-terminus: Lipase chaperone (284 aa).

A helical transmembrane segment spans residues 4–24 (IAWSLGILVTIGALCAIVWPS).

Belongs to the lipase chaperone family.

The protein localises to the cell inner membrane. Its function is as follows. May be involved in the folding of the extracellular lipase during its passage through the periplasm. This is Lipase chaperone (lifO) from Vibrio cholerae serotype O1 (strain ATCC 39315 / El Tor Inaba N16961).